A 400-amino-acid polypeptide reads, in one-letter code: tRNA pseudouridine synthase Pus10 (400 aa).

A THUMP domain is found at 77–194 (QVYVELFGSP…DGSVSVQPRR (118 aa)). A substrate-binding site is contributed by Tyr-301.

Belongs to the pseudouridine synthase Pus10 family.

The enzyme catalyses uridine(54) in tRNA = pseudouridine(54) in tRNA. The catalysed reaction is uridine(55) in tRNA = pseudouridine(55) in tRNA. Functionally, responsible for synthesis of pseudouridine from uracil-54 and uracil-55 in the psi GC loop of transfer RNAs. This Acidilobus saccharovorans (strain DSM 16705 / JCM 18335 / VKM B-2471 / 345-15) protein is tRNA pseudouridine synthase Pus10.